We begin with the raw amino-acid sequence, 1018 residues long: Thrombospondin type-1 domain-containing protein 4 (1018 aa).

An N-terminal signal peptide occupies residues 1-26; the sequence is MVSYLTSCLSALSTLLLLLGSQLVCP. Disordered stretches follow at residues 34 to 56, 116 to 240, and 534 to 623; these read KVPQRMAVTEGTPEDSGSGSPGV, HRSQ…PSEA, and SPQV…NWKQ. In terms of domain architecture, TSP type-1 1 spans 54 to 307; that stretch reads PGVWGSWGPW…YKLCNTNACP (254 aa). A compositionally biased stretch (basic residues) spans 187–199; the sequence is QRLRRQRPSSRHS. Residues 216 to 230 show a composition bias toward polar residues; the sequence is HQFSHSQPLYQSDSG. 2 stretches are compositionally biased toward basic and acidic residues: residues 558–573 and 592–603; these read QEDREEREKNQEKEDS and RHPERFPSHRPD. TSP type-1 domains follow at residues 676 to 737, 739 to 792, 793 to 851, 852 to 911, and 912 to 968; these read CPAF…KICS, WQIR…DMGP, CAKS…GPCT, GKVE…HLKP, and CGAK…QDCV. A PLAC domain is found at 971–1008; sequence VDENCKDKYYNCNVVVQARLCVYNYYKTACCASCTRVA.

In terms of assembly, isoform 2 interacts with FBN1. Isoform 2 may interact with TGFB1. In terms of tissue distribution, both isoforms are expressed in the embryo from 7 dpc through 17. Isoform 1 is widely expressed in adult tissues. Isoform 2 is detected in brain, spinal cord, eye, kidney, stomach and uterus. Mainly observed in fibrillar extracellular matrices in elastic tissues (at protein level).

The protein localises to the secreted. It localises to the extracellular space. It is found in the extracellular matrix. In terms of biological role, promotes FBN1 matrix assembly. Attenuates TGFB signaling, possibly by accelerating the sequestration of large latent complexes of TGFB or active TGFB by FBN1 microfibril assembly, thereby negatively regulating the expression of TGFB regulatory targets, such as POSTN. The protein is Thrombospondin type-1 domain-containing protein 4 (Thsd4) of Mus musculus (Mouse).